A 325-amino-acid chain; its full sequence is Formimidoylglutamase (325 aa).

Mn(2+)-binding residues include His-125, Asp-155, His-157, Asp-159, Cys-246, and Asp-248.

It belongs to the arginase family. Requires Mn(2+) as cofactor.

It catalyses the reaction N-formimidoyl-L-glutamate + H2O = formamide + L-glutamate. It participates in amino-acid degradation; L-histidine degradation into L-glutamate; L-glutamate from N-formimidoyl-L-glutamate (hydrolase route): step 1/1. Catalyzes the conversion of N-formimidoyl-L-glutamate to L-glutamate and formamide. The sequence is that of Formimidoylglutamase from Ralstonia nicotianae (strain ATCC BAA-1114 / GMI1000) (Ralstonia solanacearum).